Reading from the N-terminus, the 4660-residue chain is Low-density lipoprotein receptor-related protein 2 (4660 aa).

The first 25 residues, 1–25, serve as a signal peptide directing secretion; the sequence is MERGAAAAAWMLLLAIAACLEPVSS. The Extracellular portion of the chain corresponds to 26 to 4425; the sequence is QECGSGNFRC…LSRGIPPGTT (4400 aa). 6 LDL-receptor class A domains span residues 27 to 63, 66 to 104, 107 to 143, 141 to 180, 182 to 218, and 221 to 257; these read ECGSGNFRCDNGYCIPASWRCDGTRDCLDDTDEIGCP, SCESGLFLCPAEGTCIPSSWVCDEDKDCSDGADEQQNCA, TCSAQQMTCSNGQCIPSEYRCDHVSDCPDGSDERNCH, NCHYPTCDQLTCANGACYNTSQRCDQKVDCRDSSDEANCT, LCSQKEFECGSGECILRAYVCDHDNDCEDNSDERNCN, and TCGGHQFTCSNGQCINQNWVCDGDDDCQDSGDEDGCE. Disulfide bonds link cysteine 28/cysteine 40, cysteine 35/cysteine 53, cysteine 47/cysteine 62, cysteine 67/cysteine 80, cysteine 74/cysteine 93, cysteine 87/cysteine 103, cysteine 108/cysteine 120, cysteine 115/cysteine 133, cysteine 127/cysteine 142, cysteine 142/cysteine 157, cysteine 152/cysteine 170, cysteine 164/cysteine 179, cysteine 183/cysteine 195, cysteine 190/cysteine 208, cysteine 202/cysteine 217, cysteine 222/cysteine 234, cysteine 229/cysteine 247, and cysteine 241/cysteine 256. Residues asparagine 159 and asparagine 178 are each glycosylated (N-linked (GlcNAc...) asparagine). A glycan (N-linked (GlcNAc...) asparagine) is linked at asparagine 259. The LDL-receptor class A 7 domain maps to 264–307; it reads RCYPREWACPGSGRCISIDKVCDGVPDCPEGDDENNVTSGRTCG. 3 disulfides stabilise this stretch: cysteine 265–cysteine 278, cysteine 272–cysteine 291, and cysteine 285–cysteine 306. N-linked (GlcNAc...) asparagine glycosylation is found at asparagine 299 and asparagine 340. The EGF-like 1; calcium-binding domain maps to 347–382; it reads DFDDCQIWGICDQKCENRQGRHQCLCEEGYILERGQ. Cystine bridges form between cysteine 351–cysteine 361 and cysteine 357–cysteine 370. LDL-receptor class B repeat units follow at residues 435–477, 478–520, 521–567, and 568–612; these read HRVF…DWIN, NKLY…DPTV, GYLF…DLVS, and KRVY…FEEH. Asparagine 462 carries N-linked (GlcNAc...) asparagine glycosylation. Asparagine 657 carries N-linked (GlcNAc...) asparagine glycosylation. 4 LDL-receptor class B repeats span residues 752-794, 795-836, 837-880, and 881-924; these read STVF…DWIS, RNLY…HPTA, GYMF…DWSA, and SRLY…FKDN. The N-linked (GlcNAc...) asparagine glycan is linked to asparagine 865. Residues 1024 to 1060 enclose the LDL-receptor class A 8 domain; that stretch reads QCGSLSFPCNNGKCVPSFFRCDGVDDCHDNSDEHQCG. Intrachain disulfides connect cysteine 1025/cysteine 1037, cysteine 1032/cysteine 1050, and cysteine 1044/cysteine 1059. Asparagine 1063 carries an N-linked (GlcNAc...) asparagine glycan. LDL-receptor class A domains lie at 1065 to 1102, 1109 to 1145, 1149 to 1185, 1187 to 1224, 1230 to 1268, 1271 to 1307, and 1312 to 1350; these read TCSPSAFACVRGGQCIPGQWHCDRQNDCLDGSDEQNCP, TCPSTSFTCDNHVCIPKDWVCDTDNDCSDGSDEKNCQ, TCQPTQFRCPDHRCISPLYVCDGDKDCADGSDEAGCV, NCTSAQFKCADGSSCINSRYRCDGVYDCRDNSDEAGCP, MCHPDEFQCQGDGTCIPNTWECDGHPDCIHGSDEHTGCV, TCSPTHFLCDNGNCIYKAWICDGDNDCRDMSDEKDCP, and HCPSTQWQCPGYSTCINLSALCDGVFDCPNGTDESPLCN. Disulfide bonds link cysteine 1066–cysteine 1079, cysteine 1073–cysteine 1092, cysteine 1086–cysteine 1101, cysteine 1110–cysteine 1122, cysteine 1117–cysteine 1135, cysteine 1129–cysteine 1144, cysteine 1150–cysteine 1162, cysteine 1157–cysteine 1175, and cysteine 1169–cysteine 1184. Positions 1127, 1130, 1132, 1134, 1140, and 1141 each coordinate Ca(2+). Asparagine 1187 carries an N-linked (GlcNAc...) asparagine glycan. 18 disulfide bridges follow: cysteine 1188–cysteine 1201, cysteine 1195–cysteine 1214, cysteine 1208–cysteine 1223, cysteine 1231–cysteine 1244, cysteine 1238–cysteine 1257, cysteine 1251–cysteine 1267, cysteine 1272–cysteine 1284, cysteine 1279–cysteine 1297, cysteine 1291–cysteine 1306, cysteine 1313–cysteine 1326, cysteine 1320–cysteine 1339, cysteine 1333–cysteine 1349, cysteine 1354–cysteine 1365, cysteine 1361–cysteine 1374, cysteine 1376–cysteine 1389, cysteine 1395–cysteine 1405, cysteine 1401–cysteine 1414, and cysteine 1416–cysteine 1429. Ca(2+)-binding residues include tyrosine 1206, aspartate 1209, valine 1211, aspartate 1213, aspartate 1219, and glutamate 1220. Asparagine 1328 and asparagine 1341 each carry an N-linked (GlcNAc...) asparagine glycan. The region spanning 1350–1390 is the EGF-like 2 domain; that stretch reads NQDSCSHFNGGCTHQCMQGPFGATCLCPLGYQLANDTKTCE. Asparagine 1384 carries N-linked (GlcNAc...) asparagine glycosylation. Residues 1391 to 1430 enclose the EGF-like 3; calcium-binding domain; sequence DINECDIPGFCSQHCVNMRGSFRCACDPEYTLESDGRTCK. N-linked (GlcNAc...) asparagine glycans are attached at residues asparagine 1451, asparagine 1497, and asparagine 1551. LDL-receptor class B repeat units lie at residues 1479–1521, 1522–1564, 1567–1610, 1611–1655, and 1656–1696; these read GRVF…DWIG, RNLY…DPRM, NVMF…DYPN, RLIY…FEDF, and VYWT…IHPS. Asparagine 1676, asparagine 1733, and asparagine 1811 each carry an N-linked (GlcNAc...) asparagine glycan. 9 LDL-receptor class B repeats span residues 1791-1833, 1834-1883, 1884-1931, 1932-1973, 1974-2014, 2108-2157, 2158-2202, 2203-2246, and 2247-2290; these read QFIY…DWVS, RNIY…DPAR, GKLY…DIQE, QKLY…YGSF, LYYS…YHRR, GFIY…DWAA, GNLY…DPKH, RYLF…DHDT, and GYIY…FGES. Asparagine 2134, asparagine 2178, and asparagine 2225 each carry an N-linked (GlcNAc...) asparagine glycan. Asparagine 2396 carries an N-linked (GlcNAc...) asparagine glycan. 5 LDL-receptor class B repeats span residues 2432 to 2478, 2479 to 2519, 2520 to 2563, 2564 to 2605, and 2606 to 2647; these read NRIF…DWIN, RRIY…DPCR, GYMY…DLET, DLLY…YGQY, and IYWT…VVKT. N-linked (GlcNAc...) asparagine glycans are attached at residues asparagine 2488 and asparagine 2548. 10 consecutive LDL-receptor class A domains span residues 2700 to 2738, 2741 to 2777, 2780 to 2819, 2822 to 2861, 2864 to 2902, 2907 to 2946, 2949 to 2991, 2994 to 3030, 3033 to 3071, and 3076 to 3112; these read RCNQLQFTCLNGHCINQDWKCDNDNDCGDGSDELPTVCA, TCRSTAFTCGNGRCVPYHYRCDYYNDCGDNSDEAGCL, NCNSTTEFTCSNGRCIPLSYVCNGINNCHDNDTSDEKNCP, TCPPDFTKCQTTNICVPRAFLCDGDNDCGDGSDENPIYCA, TCRSNEFQCLSPQRCIPSYWFCDGEADCADGSDEPDTCG, TCRASQFQCDNGRCISGNWVCDGDNDCGDMSDEDQRHHCE, NCSS…QNCT, TCSAGEFSCANGRCVRQSFRCDRRNDCGDYSDERGCS, PCHANQFTCQNGRCIPRFFVCDEDNDCGDGSDEQEHLCH, and TCPLHQFRCDNGHCIEMGRVCNHVDDCSDNSDEKGCG. Intrachain disulfides connect cysteine 2701–cysteine 2713, cysteine 2708–cysteine 2726, cysteine 2720–cysteine 2737, cysteine 2742–cysteine 2754, cysteine 2749–cysteine 2767, cysteine 2761–cysteine 2776, cysteine 2781–cysteine 2794, cysteine 2789–cysteine 2807, cysteine 2801–cysteine 2818, cysteine 2823–cysteine 2836, cysteine 2830–cysteine 2849, cysteine 2843–cysteine 2860, cysteine 2865–cysteine 2878, cysteine 2872–cysteine 2891, cysteine 2885–cysteine 2901, cysteine 2908–cysteine 2920, cysteine 2915–cysteine 2933, and cysteine 2927–cysteine 2945. Residue asparagine 2782 is glycosylated (N-linked (GlcNAc...) asparagine). N-linked (GlcNAc...) asparagine glycosylation is present at asparagine 2810. An N-linked (GlcNAc...) asparagine glycan is attached at asparagine 2949. 18 disulfide bridges follow: cysteine 2950–cysteine 2967, cysteine 2957–cysteine 2980, cysteine 2974–cysteine 2990, cysteine 2995–cysteine 3007, cysteine 3002–cysteine 3020, cysteine 3014–cysteine 3029, cysteine 3034–cysteine 3046, cysteine 3041–cysteine 3059, cysteine 3053–cysteine 3070, cysteine 3077–cysteine 3089, cysteine 3084–cysteine 3102, cysteine 3096–cysteine 3111, cysteine 3116–cysteine 3128, cysteine 3124–cysteine 3137, cysteine 3139–cysteine 3152, cysteine 3158–cysteine 3169, cysteine 3165–cysteine 3178, and cysteine 3180–cysteine 3193. Asparagine 2989 is a glycosylation site (N-linked (GlcNAc...) asparagine). The EGF-like 4 domain occupies 3112–3153; it reads GINECLDSSISRCDHNCTDTITSFYCSCLPGYKLMSDKRSCV. Residue asparagine 3127 is glycosylated (N-linked (GlcNAc...) asparagine). Residues 3154–3194 form the EGF-like 5; calcium-binding domain; the sequence is DIDECKESPQLCSQKCENVVGSYICKCAPGYIREPDGKSCR. 4 N-linked (GlcNAc...) asparagine glycosylation sites follow: asparagine 3213, asparagine 3259, asparagine 3317, and asparagine 3357. 5 LDL-receptor class B repeats span residues 3241–3283, 3284–3326, 3335–3378, 3379–3421, and 3422–3462; these read KRLY…DWVS, RKLY…EHPR, GHVY…DYTN, DLLY…FEDT, and VFWT…YHPY. A glycan (N-linked (GlcNAc...) asparagine) is linked at asparagine 3448. LDL-receptor class A domains lie at 3513–3551, 3554–3592, 3595–3633, 3636–3674, 3679–3717, 3720–3757, 3760–3796, and 3799–3835; these read MCSSTQFLCGNNEKCIPIWWKCDGQKDCSDGSDEPDLCP, FCRLGQFQCRDGNCTSPQALCNARQDCADGSDEDRVLCE, RCESNEWQCANKRCIPQSWQCDSVNDCLDNSDEDTSHCA, TCRPGQFKCNNGRCIPQSWKCDVDNDCGDYSDEPIDECT, NCDNHTEFSCKTNYRCIPQWAVCNGFDDCRDNSDEQGCE, PCHPSGDFRCANHHCIPLRWKCDGTDDCGDNSDEENCV, ECSESEFRCADQQCIPSRWVCDQENDCGDNSDERDCE, and TCHPEHFQCTSGHCVPKALACDGRADCLDASDESACP. 24 disulfide bridges follow: cysteine 3514–cysteine 3527, cysteine 3521–cysteine 3540, cysteine 3534–cysteine 3550, cysteine 3555–cysteine 3567, cysteine 3562–cysteine 3580, cysteine 3574–cysteine 3591, cysteine 3596–cysteine 3608, cysteine 3603–cysteine 3621, cysteine 3615–cysteine 3632, cysteine 3637–cysteine 3649, cysteine 3644–cysteine 3662, cysteine 3656–cysteine 3673, cysteine 3680–cysteine 3694, cysteine 3688–cysteine 3707, cysteine 3701–cysteine 3716, cysteine 3721–cysteine 3734, cysteine 3729–cysteine 3747, cysteine 3741–cysteine 3756, cysteine 3761–cysteine 3773, cysteine 3768–cysteine 3786, cysteine 3780–cysteine 3795, cysteine 3800–cysteine 3812, cysteine 3807–cysteine 3825, and cysteine 3819–cysteine 3834. Residue asparagine 3566 is glycosylated (N-linked (GlcNAc...) asparagine). Residue asparagine 3682 is glycosylated (N-linked (GlcNAc...) asparagine). The N-linked (GlcNAc...) asparagine glycan is linked to asparagine 3840. LDL-receptor class A domains lie at 3843–3881, 3884–3923, and 3929–3965; these read YCPAAMFECKNHVCIQSFWICDGENDCVDGSDEEIHLCF, PCESPQRFRCDNSRCVYGHQLCNGVDDCGDGSDEKEEHCR, and PCTDTEYKCSNGNCISQHYVCDNVNDCGDLSDETGCN. Cystine bridges form between cysteine 3844-cysteine 3856, cysteine 3851-cysteine 3869, cysteine 3863-cysteine 3880, cysteine 3885-cysteine 3898, cysteine 3893-cysteine 3911, cysteine 3905-cysteine 3922, cysteine 3930-cysteine 3942, cysteine 3937-cysteine 3955, and cysteine 3949-cysteine 3964. Residues 3968 to 4003 enclose the EGF-like 6 domain; the sequence is DNRTCAENICEQNCTQLSSGGFICSCRPGFKPSTSD. Residues asparagine 3969 and asparagine 3980 are each glycosylated (N-linked (GlcNAc...) asparagine). Intrachain disulfides connect cysteine 3972–cysteine 3981, cysteine 3977–cysteine 3991, cysteine 4013–cysteine 4023, cysteine 4019–cysteine 4032, and cysteine 4034–cysteine 4049. In terms of domain architecture, EGF-like 7; calcium-binding spans 4009 to 4050; sequence DINECEEFGICPQSCRNSKGSYECFCVDGFKSMSTHYGERCA. Asparagine 4070 carries N-linked (GlcNAc...) asparagine glycosylation. LDL-receptor class B repeat units follow at residues 4156–4198, 4199–4242, and 4244–4285; these read RHIY…NPKL, GLMF…DYLN, and DRVY…FEDK. Asparagine 4329 is a glycosylation site (N-linked (GlcNAc...) asparagine). In terms of domain architecture, EGF-like 8 spans 4379 to 4413; sequence MPPPCRCMHGGNCYFDENELPKCKCSSGYSGEYCE. 3 cysteine pairs are disulfide-bonded: cysteine 4383-cysteine 4391, cysteine 4385-cysteine 4401, and cysteine 4403-cysteine 4412. Residues 4426 to 4446 form a helical membrane-spanning segment; it reads MAVLLTFVIVIIVGALVLVGL. The Cytoplasmic portion of the chain corresponds to 4447–4660; the sequence is FHYRKTGSLL…ANLVKEDSDV (214 aa). Positions 4454–4463 match the SH3-binding motif; the sequence is SLLPTLPKLP. The PxLPxI/L motif 1; mediates interaction with ANKRA2 motif lies at 4457 to 4462; it reads PTLPKL. The short motif at 4460-4465 is the PxLPxI/L motif 2; mediates interaction with ANKRA2 element; the sequence is PKLPSL. Serine 4464 and serine 4467 each carry phosphoserine. Positions 4522–4527 match the Endocytosis signal motif; sequence FENPMY. Residues 4559–4582 form a disordered region; it reads NYGRPIDPSEIVPEPKPASPGADE. Serine 4577 is subject to Phosphoserine. An interaction with DAB2 region spans residues 4597-4610; sequence QTTNFENPIYAEMD. Positions 4603–4606 match the NPXY motif motif; that stretch reads NPIY. The SH2-binding signature appears at 4606-4609; it reads YAEM. The disordered stretch occupies residues 4617–4660; sequence VAVAPPPSPSLPAKASKRNLTPGYTATEDTFKDTANLVKEDSDV. The short motif at 4619–4630 is the SH3-binding element; it reads VAPPPSPSLPAK. Residue serine 4624 is modified to Phosphoserine. Polar residues predominate over residues 4634–4644; it reads RNLTPGYTATE. Threonine 4637 is modified (phosphothreonine). Serine 4658 bears the Phosphoserine mark.

The protein belongs to the LDLR family. In terms of assembly, binds plasminogen, extracellular matrix components, plasminogen activator-plasminogen activator inhibitor type I complex, apolipoprotein E-enriched beta-VLDL, lipoprotein lipase, lactoferrin, CLU/clusterin and calcium. Forms a multimeric complex together with LRPAP1. Interacts (via PxLPxI/L motif) with ANKRA2 (via ankyrin repeats). Interacts with LRP2BP. Interacts (via NPXY motif) with DAB2; the interaction is not affected by tyrosine phosphorylation of the NPXY motif. Interacts with MB. Interacts with BMP4. Interacts with the Sonic hedgehog protein N-product which is the active product of SHH. Interacts with CST3 in a calcium-dependent manner. Interacts with the vitamin-D binding protein GC/DBP. Interacts with sex hormone-binding protein SHBG. Interacts with angiotensin-2. Also interacts with angiotensin 1-7. Interacts with APOM. Interacts with selenoprotein SEPP1. Interacts with LEP. Interacts with ALB. Interacts with the antiapoptotic protein BIRC5/survivin. Interacts with matrix metalloproteinase MMP2 in complex with metalloproteinase inhibitor TIMP1. In neurons, forms a trimeric complex with APP and APPB1/FE65. Interacts with LDLRAP1/ARH; mediates trafficking of LRP2 to the endocytic recycling compartment. Does not interact with beta-amyloid protein 40 alone but interacts with the complex composed of beta-amyloid protein 40 and CLU/APOJ. Interacts with MDK. In terms of processing, a fraction undergoes proteolytic cleavage of the extracellular domain at the cell membrane to generate a cytoplasmic tail fragment. This is internalized into the early endosome from where it trafficks in an LDLRAP1/ARH-dependent manner to the endocytic recycling compartment (ERC). In the ERC, it is further cleaved by gamma-secretase to release a fragment which translocates to the nucleus and mediates transcriptional repression. Post-translationally, N-glycosylation is required for ligand binding. In terms of tissue distribution, in the inner ear, expressed in the lumen of the endolymphatic sac where it localizes to macrophage-like cells as well as to mitochondria-rich and ribosome-rich epithelial cells (at protein level). In the inner ear, expressed in marginal cells of the stria vascularis, epithelial cells at the spiral prominence, epithelial cells of Reissner's membrane facing the cochlear duct, and Kolliker's organ (at protein level). Expressed in the choroid plexus epithelium in the brain (at protein level). In the brain, also expressed in astrocytes (at protein level). Expression also detected in epithelial cells of the kidney glomerulus and proximal tubule, lung, epididymis and yolk sac.

Its subcellular location is the apical cell membrane. It is found in the endosome lumen. The protein localises to the membrane. It localises to the clathrin-coated pit. The protein resides in the cell projection. Its subcellular location is the dendrite. It is found in the axon. Functionally, multiligand endocytic receptor. Acts together with CUBN to mediate endocytosis of high-density lipoproteins. Mediates receptor-mediated uptake of polybasic drugs such as aprotinin, aminoglycosides and polymyxin B. In the kidney, mediates the tubular uptake and clearance of leptin. Also mediates transport of leptin across the blood-brain barrier through endocytosis at the choroid plexus epithelium. Endocytosis of leptin in neuronal cells is required for hypothalamic leptin signaling and leptin-mediated regulation of feeding and body weight. Mediates endocytosis and subsequent lysosomal degradation of CST3 in kidney proximal tubule cells. Mediates renal uptake of 25-hydroxyvitamin D3 in complex with the vitamin D3 transporter GC/DBP. Mediates renal uptake of metallothionein-bound heavy metals. Together with CUBN, mediates renal reabsorption of myoglobin. Mediates renal uptake and subsequent lysosomal degradation of APOM. Plays a role in kidney selenium homeostasis by mediating renal endocytosis of selenoprotein SEPP1. Mediates renal uptake of the antiapoptotic protein BIRC5/survivin which may be important for functional integrity of the kidney. Mediates renal uptake of matrix metalloproteinase MMP2 in complex with metalloproteinase inhibitor TIMP1. Mediates endocytosis of Sonic hedgehog protein N-product (ShhN), the active product of SHH. Also mediates ShhN transcytosis. In the embryonic neuroepithelium, mediates endocytic uptake and degradation of BMP4, is required for correct SHH localization in the ventral neural tube and plays a role in patterning of the ventral telencephalon. Required at the onset of neurulation to sequester SHH on the apical surface of neuroepithelial cells of the rostral diencephalon ventral midline and to control PTCH1-dependent uptake and intracellular trafficking of SHH. During neurulation, required in neuroepithelial cells for uptake of folate bound to the folate receptor FOLR1 which is necessary for neural tube closure. In the adult brain, negatively regulates BMP signaling in the subependymal zone which enables neurogenesis to proceed. In astrocytes, mediates endocytosis of ALB which is required for the synthesis of the neurotrophic factor oleic acid. Involved in neurite branching. During optic nerve development, required for SHH-mediated migration and proliferation of oligodendrocyte precursor cells. Mediates endocytic uptake and clearance of SHH in the retinal margin which protects retinal progenitor cells from mitogenic stimuli and keeps them quiescent. Plays a role in reproductive organ development by mediating uptake in reproductive tissues of androgen and estrogen bound to the sex hormone binding protein SHBG. Mediates endocytosis of angiotensin-2. Also mediates endocytosis of angiotensin 1-7. Binds to the complex composed of beta-amyloid protein 40 and CLU/APOJ and mediates its endocytosis and lysosomal degradation. Required for embryonic heart development. Required for normal hearing, possibly through interaction with estrogen in the inner ear. The protein is Low-density lipoprotein receptor-related protein 2 (Lrp2) of Rattus norvegicus (Rat).